We begin with the raw amino-acid sequence, 53 residues long: MVRKKANHSRPGMNAAKAQGKDAGLTSQFHAEIGQEPLNQAQRQNNKKRKKNQ.

The interval 1–53 is disordered; it reads MVRKKANHSRPGMNAAKAQGKDAGLTSQFHAEIGQEPLNQAQRQNNKKRKKNQ.

The protein belongs to the SspO family.

It localises to the spore core. The sequence is that of Small, acid-soluble spore protein O from Halalkalibacterium halodurans (strain ATCC BAA-125 / DSM 18197 / FERM 7344 / JCM 9153 / C-125) (Bacillus halodurans).